Consider the following 501-residue polypeptide: Glycerol kinase (501 aa).

T12 is a binding site for ADP. The ATP site is built by T12, T13, and S14. T12 provides a ligand contact to sn-glycerol 3-phosphate. R16 is an ADP binding site. Sn-glycerol 3-phosphate contacts are provided by R82, E83, Y134, and D244. R82, E83, Y134, D244, and Q245 together coordinate glycerol. Positions 266 and 310 each coordinate ADP. Residues T266, G310, Q314, and G411 each contribute to the ATP site. ADP-binding residues include G411 and N415.

Belongs to the FGGY kinase family.

It carries out the reaction glycerol + ATP = sn-glycerol 3-phosphate + ADP + H(+). Its pathway is polyol metabolism; glycerol degradation via glycerol kinase pathway; sn-glycerol 3-phosphate from glycerol: step 1/1. With respect to regulation, inhibited by fructose 1,6-bisphosphate (FBP). Its function is as follows. Key enzyme in the regulation of glycerol uptake and metabolism. Catalyzes the phosphorylation of glycerol to yield sn-glycerol 3-phosphate. The protein is Glycerol kinase of Methylobacterium radiotolerans (strain ATCC 27329 / DSM 1819 / JCM 2831 / NBRC 15690 / NCIMB 10815 / 0-1).